Reading from the N-terminus, the 244-residue chain is tRNA pseudouridine synthase A (244 aa).

Asp-52 serves as the catalytic Nucleophile. Tyr-110 lines the substrate pocket.

It belongs to the tRNA pseudouridine synthase TruA family. As to quaternary structure, homodimer.

The enzyme catalyses uridine(38/39/40) in tRNA = pseudouridine(38/39/40) in tRNA. Its function is as follows. Formation of pseudouridine at positions 38, 39 and 40 in the anticodon stem and loop of transfer RNAs. This is tRNA pseudouridine synthase A from Acetivibrio thermocellus (strain ATCC 27405 / DSM 1237 / JCM 9322 / NBRC 103400 / NCIMB 10682 / NRRL B-4536 / VPI 7372) (Clostridium thermocellum).